The sequence spans 501 residues: G protein-activated inward rectifier potassium channel 1 (501 aa).

Positions 1–40 (MSALRRKFGDDYQVVTTSSSGSGLQPQGPGQGPQQQLVPK) are disordered. Topologically, residues 1–80 (MSALRRKFGD…LFTTLVDLKW (80 aa)) are cytoplasmic. A compositionally biased stretch (low complexity) spans 18 to 37 (SSSGSGLQPQGPGQGPQQQL). A helical membrane pass occupies residues 81 to 105 (RWNLFIFILTYTVAWLFMASMWWVI). The Extracellular segment spans residues 106-129 (AYTRGDLNKAHVGNYTPCVANVYN). N-linked (GlcNAc...) asparagine glycosylation is present at Asn119. Residues 130-141 (FPSAFLFFIETE) constitute an intramembrane region (helical; Pore-forming). The segment at residues 142 to 148 (ATIGYGY) is an intramembrane region (pore-forming). A Selectivity filter motif is present at residues 143-148 (TIGYGY). The Extracellular segment spans residues 149–157 (RYITDKCPE). A helical membrane pass occupies residues 158–179 (GIILFLFQSILGSIVDAFLIGC). Residues 180–501 (MFIKMSQPKK…LRKMNSDRFT (322 aa)) lie on the Cytoplasmic side of the membrane. Residues 182–209 (IKMSQPKKRAETLMFSEHAVISMRDGKL) form a polyphosphoinositide (PIP2)-binding region. Ser385 and Ser424 each carry phosphoserine. Positions 456–467 (TKMLSDPMSQSV) are enriched in polar residues. Residues 456 to 501 (TKMLSDPMSQSVADLPPKLQKMAGGPTRMEGNLPAKLRKMNSDRFT) are disordered.

This sequence belongs to the inward rectifier-type potassium channel (TC 1.A.2.1) family. KCNJ3 subfamily. In terms of assembly, associates with KCNJ5/GIRK4 or KCNJ6/GIRK2 to form a G-protein activated heteromultimer pore-forming unit. The resulting inward current is much larger. Associates with KCNJ9/GIRK3 to form a G-protein activated heteromultimer pore-forming unit.

It localises to the membrane. It catalyses the reaction K(+)(in) = K(+)(out). Heteromultimer composed of KCNJ3/GIRK1 and KCNJ5/GIRK4 is activated by phosphatidylinositol 4,5 biphosphate (PtdIns(4,5)P2). In terms of biological role, inward rectifier potassium channels are characterized by a greater tendency to allow potassium to flow into the cell rather than out of it. Their voltage dependence is regulated by the concentration of extracellular potassium; as external potassium is raised, the voltage range of the channel opening shifts to more positive voltages. The inward rectification is mainly due to the blockage of outward current by internal magnesium. This potassium channel is controlled by G proteins. This receptor plays a crucial role in regulating the heartbeat. Forms a functional channel in association with KCNJ9/GIRK3. In Rattus norvegicus (Rat), this protein is G protein-activated inward rectifier potassium channel 1 (Kcnj3).